The sequence spans 184 residues: Photosystem I assembly protein Ycf4 (184 aa).

2 consecutive transmembrane segments (helical) span residues 19 to 39 (ISNF…LLVG) and 57 to 77 (IVFF…LFIS).

This sequence belongs to the Ycf4 family.

Its subcellular location is the plastid. It localises to the chloroplast thylakoid membrane. Functionally, seems to be required for the assembly of the photosystem I complex. The polypeptide is Photosystem I assembly protein Ycf4 (Nymphaea alba (White water-lily)).